The primary structure comprises 288 residues: Serine/threonine-protein acetyltransferase YopJ (288 aa).

Catalysis depends on residues histidine 109 and glutamate 128. CoA is bound at residue histidine 109. 167 to 168 (RS) provides a ligand contact to CoA. Cysteine 172 is an active-site residue. Residues 182–185 (KLYI) and 224–225 (KH) contribute to the 1D-myo-inositol hexakisphosphate site. 227 to 230 (QGKK) is a CoA binding site. Arginine 257 contributes to the 1D-myo-inositol hexakisphosphate binding site. 266–270 (DGKEL) provides a ligand contact to CoA.

It belongs to the acetyltransferase YopJ family. It depends on 1D-myo-inositol hexakisphosphate as a cofactor.

It is found in the secreted. It catalyses the reaction L-threonyl-[protein] + acetyl-CoA = O-acetyl-L-threonyl-[protein] + CoA. It carries out the reaction L-seryl-[protein] + acetyl-CoA = O-acetyl-L-seryl-[protein] + CoA. Its activity is regulated as follows. 1D-myo-inositol hexakisphosphate activates protein-acetyltransferase activity via an allosteric mechanism: 1D-myo-inositol hexakisphosphate-binding induces a conformational rearrangement that stimulates the interaction with acetyl-CoA. Its function is as follows. Serine/threonine-protein acetyltransferase translocated into infected cells, which inhibits the host immune response and induces cell death by mediating acetylation of target proteins. Inhibits the MAPK and NF-kappa-B signaling pathways by acetylating protein-kinases such as MAP2K1, MAP2K6, MAP3K7/TAK1 and I-kappa-B kinase (CHUK/IKKA and IKBKB) on serine and threonine residues critical for their activation by phosphorylation, thereby preventing protein-kinase activation. Promotes pyroptosis, a programmed cell death, in host cells by mediating acetylation of MAP3K7/TAK1: MAP3K7/TAK1 inactivation triggers activation of caspase-8 (CASP8), followed by CASP8-dependent cleavage of gasdermin-D (GSDMD) and induction of pyroptosis. Also able to induce intestinal barrier dysfunction by acetylating and inhibiting host protein-kinases RIPK2/RICK and MAP3K7/TAK1, thereby promoting cell death. The chain is Serine/threonine-protein acetyltransferase YopJ from Yersinia pseudotuberculosis serotype I (strain IP32953).